The chain runs to 532 residues: Putative L-lactate permease (532 aa).

Transmembrane regions (helical) follow at residues 23–43, 56–76, 101–121, 129–149, 152–172, 180–200, 213–233, 234–254, 274–294, 346–366, 387–407, 420–440, 462–482, and 508–528; these read ALPSYVALPWVATLVMGVHLL, VVSAIIAVQTPITVIFGAILF, VAQLMIIGWAFAFMIEGASGF, APILVGLGFHPLKVAMLALIM, VPVSFGAVGTPTWFGFGALKL, IGSITAFIHSIAALIIPLLAL, IVFIYISVLGCVVPYFLIAQV, NYEFPSLVGGAIGLFISVWAA, AGEVVKALFPTGLLIAFLIVT, LLYVPALIPFVITVLIAIPFF, PFIALIGALVMVNLMLVGGEH, ISGSNWTIFSSFLGAIGSFFS, GISVALVLALQSVGGAMGNMV, and IIPMIIYGIIAALGALFLVPL.

It belongs to the lactate permease family.

Its subcellular location is the cell inner membrane. May play a role in L-lactate transport. In Haemophilus influenzae (strain ATCC 51907 / DSM 11121 / KW20 / Rd), this protein is Putative L-lactate permease.